Here is a 441-residue protein sequence, read N- to C-terminus: ATP-dependent protease ATPase subunit HslU (441 aa).

ATP-binding positions include I18, 60-65, D254, E319, and R391; that span reads GVGKTE.

This sequence belongs to the ClpX chaperone family. HslU subfamily. A double ring-shaped homohexamer of HslV is capped on each side by a ring-shaped HslU homohexamer. The assembly of the HslU/HslV complex is dependent on binding of ATP.

Its subcellular location is the cytoplasm. Its function is as follows. ATPase subunit of a proteasome-like degradation complex; this subunit has chaperone activity. The binding of ATP and its subsequent hydrolysis by HslU are essential for unfolding of protein substrates subsequently hydrolyzed by HslV. HslU recognizes the N-terminal part of its protein substrates and unfolds these before they are guided to HslV for hydrolysis. In Actinobacillus succinogenes (strain ATCC 55618 / DSM 22257 / CCUG 43843 / 130Z), this protein is ATP-dependent protease ATPase subunit HslU.